The primary structure comprises 129 residues: uncharacterized protein (129 aa).

The N-terminal stretch at methionine 1–alanine 20 is a signal peptide.

This is an uncharacterized protein from Saccharomyces cerevisiae (strain ATCC 204508 / S288c) (Baker's yeast).